The following is a 539-amino-acid chain: GMP synthase [glutamine-hydrolyzing] (539 aa).

The region spanning 4 to 202 (KILILDFGSQ…VLQIAGAKPD (199 aa)) is the Glutamine amidotransferase type-1 domain. The active-site Nucleophile is cysteine 81. Catalysis depends on residues histidine 176 and glutamate 178. The 193-residue stretch at 203 to 395 (WIMSNHIEEA…LGLPPEMVYR (193 aa)) folds into the GMPS ATP-PPase domain. Position 230–236 (230–236 (SGGVDSS)) interacts with ATP.

In terms of assembly, homodimer.

The catalysed reaction is XMP + L-glutamine + ATP + H2O = GMP + L-glutamate + AMP + diphosphate + 2 H(+). The protein operates within purine metabolism; GMP biosynthesis; GMP from XMP (L-Gln route): step 1/1. Functionally, catalyzes the synthesis of GMP from XMP. The polypeptide is GMP synthase [glutamine-hydrolyzing] (Burkholderia ambifaria (strain MC40-6)).